The following is a 223-amino-acid chain: Protein Mis18-alpha (223 aa).

Positions methionine 1 to lysine 30 are disordered. Residues proline 9–histidine 18 show a composition bias toward polar residues. The span at lysine 21–lysine 30 shows a compositional bias: basic and acidic residues. A phosphoserine mark is found at serine 33, serine 36, and serine 37. The region spanning proline 71–leucine 169 is the Mis18 domain. The Zn(2+) site is built by cysteine 76, cysteine 79, cysteine 132, and cysteine 135. Lysine 153 participates in a covalent cross-link: Glycyl lysine isopeptide (Lys-Gly) (interchain with G-Cter in SUMO2). A Phosphoserine modification is found at serine 223.

The protein belongs to the mis18 family. In terms of assembly, homodimer, and heterodimer with OIP5/MIS18B. Identified in a complex containing MIS18A, OIP5/MIS18B, MIS18BP1, RBBP7 and RBBP4.

It localises to the nucleus. Its subcellular location is the chromosome. The protein localises to the centromere. Functionally, required for recruitment of CENPA to centromeres and normal chromosome segregation during mitosis. This chain is Protein Mis18-alpha (Mis18a), found in Rattus norvegicus (Rat).